We begin with the raw amino-acid sequence, 143 residues long: Phosphatidylethanolamine-binding protein homolog R644 (143 aa).

Belongs to the phosphatidylethanolamine-binding protein family.

It is found in the virion. The chain is Phosphatidylethanolamine-binding protein homolog R644 from Acanthamoeba polyphaga mimivirus (APMV).